The following is a 207-amino-acid chain: MAGPATQSPMKLMALQLLLWHSALWTVQEATPLGPASSLPQSFLLKCLEQVRKIQGDGAALQEKLVSECATYKLCHPEELVLLGHSLGIPWAPLSSCPSQALQLAGCLSQLHSGLFLYQGLLQALEGISPELGPTLDTLQLDVADFATTIWQQMEELGMAPALQPTQGAMPAFASAFQRRAGGVLVASHLQSFLEVSYRVLRHLAQP.

Positions 1-30 (MAGPATQSPMKLMALQLLLWHSALWTVQEA) are cleaved as a signal peptide. Cystine bridges form between C69/C75 and C97/C107. O-linked (GalNAc...) threonine glycosylation is present at T166.

The protein belongs to the IL-6 superfamily. As to quaternary structure, monomer. In terms of processing, O-glycan consists of Gal-GalNAc disaccharide which can be modified with up to two sialic acid residues (done in recombinantly expressed G-CSF from CHO cells).

Its subcellular location is the secreted. Its function is as follows. Granulocyte/macrophage colony-stimulating factors are cytokines that act in hematopoiesis by controlling the production, differentiation, and function of 2 related white cell populations of the blood, the granulocytes and the monocytes-macrophages. This CSF induces granulocytes. The sequence is that of Granulocyte colony-stimulating factor (CSF3) from Homo sapiens (Human).